Here is a 228-residue protein sequence, read N- to C-terminus: Urease accessory protein UreF (228 aa).

It belongs to the UreF family. As to quaternary structure, ureD, UreF and UreG form a complex that acts as a GTP-hydrolysis-dependent molecular chaperone, activating the urease apoprotein by helping to assemble the nickel containing metallocenter of UreC. The UreE protein probably delivers the nickel.

The protein resides in the cytoplasm. In terms of biological role, required for maturation of urease via the functional incorporation of the urease nickel metallocenter. This Photorhabdus laumondii subsp. laumondii (strain DSM 15139 / CIP 105565 / TT01) (Photorhabdus luminescens subsp. laumondii) protein is Urease accessory protein UreF.